The following is a 306-amino-acid chain: Tryptophan 2,3-dioxygenase (306 aa).

A disordered region spans residues 1–29 (MQPPGDDAAPRCPFAGAHAPDAPHVPEAA). Substrate is bound by residues 75–79 (FIIQH), Y137, and R141. Residue H264 coordinates heme. T278 serves as a coordination point for substrate.

Belongs to the tryptophan 2,3-dioxygenase family. Homotetramer. Heme serves as cofactor.

The catalysed reaction is L-tryptophan + O2 = N-formyl-L-kynurenine. It participates in amino-acid degradation; L-tryptophan degradation via kynurenine pathway; L-kynurenine from L-tryptophan: step 1/2. Heme-dependent dioxygenase that catalyzes the oxidative cleavage of the L-tryptophan (L-Trp) pyrrole ring and converts L-tryptophan to N-formyl-L-kynurenine. Catalyzes the oxidative cleavage of the indole moiety. This is Tryptophan 2,3-dioxygenase from Burkholderia mallei (strain NCTC 10247).